The chain runs to 614 residues: Probable indole-3-acetic acid-amido synthetase GH3.2 (614 aa).

It belongs to the IAA-amido conjugating enzyme family. As to expression, expressed in roots, flowers and callus.

May catalyze the synthesis of indole-3-acetic acid (IAA)-amino acid conjugates, providing a mechanism for the plant to cope with the presence of excess auxin. This is Probable indole-3-acetic acid-amido synthetase GH3.2 (GH3.2) from Oryza sativa subsp. japonica (Rice).